The chain runs to 356 residues: Protein disulfide isomerase crld-1 (356 aa).

The first 17 residues, 1–17 (MSRILLLLAVLIGATSQ), serve as a signal peptide directing secretion. The Lumenal portion of the chain corresponds to 18 to 299 (KEVTIKNEKC…DRPFMPIDQQ (282 aa)). The CXXC motif lies at 27–30 (CRTC). A disulfide bridge connects residues Cys27 and Cys30. An N-linked (GlcNAc...) asparagine glycan is attached at Asn122. The 39-residue stretch at 150-188 (GLSEKADVCFGKGSCHGDGSREGSGKCKCETGYTGNLCR) folds into the EGF-like 1 domain. Cystine bridges form between Cys158–Cys176, Cys178–Cys187, Cys245–Cys258, Cys251–Cys267, and Cys269–Cys281. The 42-residue stretch at 241–282 (DVNECQNESACTKEHEICVNTVGSFKCECKEGYKKDDEQNCQ) folds into the EGF-like 2; calcium-binding domain. Asn247 carries an N-linked (GlcNAc...) asparagine glycan. The helical transmembrane segment at 300-317 (LKLIAFSSLIIIITFVVW) threads the bilayer. Residues 318-321 (HGSP) are Cytoplasmic-facing. The helical transmembrane segment at 322-341 (VLYVLTGITIVALILVDLYV) threads the bilayer. Residues 342 to 356 (NPDTIPDEAKRFLGY) lie on the Lumenal side of the membrane.

Belongs to the CRELD family. As to quaternary structure, interacts with unc-29. In terms of tissue distribution, isoforms a: Widely expressed in tissues including body wall muscles, neurons, pharynx, hypodermis, seam cells, intestine and gonad. Isoform b: Widely expressed in tissues including body wall muscles, neurons, pharynx, hypodermis, seam cells, intestine and gonad.

It localises to the endoplasmic reticulum membrane. Its subcellular location is the endoplasmic reticulum lumen. It carries out the reaction Catalyzes the rearrangement of -S-S- bonds in proteins.. In terms of biological role, protein disulfide isomerase which associates with the unc-29 subunit of levamisole-sensitive nicotinic acetylcholine receptors (L-nAChR) to promote L-nAChR assembly in the endoplasmic reticulum at neuromuscular junctions. Functionally, promotes L-nAChR assembly in the endoplasmic reticulum at neuromuscular junctions. The chain is Protein disulfide isomerase crld-1 from Caenorhabditis elegans.